The chain runs to 449 residues: Argininosuccinate synthase (449 aa).

Residues 17-25 and Ala43 contribute to the ATP site; that span reads AFSGGLDTS. Tyr99 is an L-citrulline binding site. ATP-binding residues include Gly129 and Thr131. Residues Thr131, Asn135, and Asp136 each contribute to the L-aspartate site. Residue Asn135 participates in L-citrulline binding. Asp136 is a binding site for ATP. Residues Arg139 and Ser192 each coordinate L-citrulline. Residue Asp194 coordinates ATP. Thr201, Glu203, and Glu280 together coordinate L-citrulline.

The protein belongs to the argininosuccinate synthase family. Type 2 subfamily. Homotetramer.

It localises to the cytoplasm. It carries out the reaction L-citrulline + L-aspartate + ATP = 2-(N(omega)-L-arginino)succinate + AMP + diphosphate + H(+). It functions in the pathway amino-acid biosynthesis; L-arginine biosynthesis; L-arginine from L-ornithine and carbamoyl phosphate: step 2/3. This is Argininosuccinate synthase from Dickeya dadantii (strain 3937) (Erwinia chrysanthemi (strain 3937)).